The following is a 616-amino-acid chain: Chaperone protein HscA (616 aa).

The protein belongs to the heat shock protein 70 family.

In terms of biological role, chaperone involved in the maturation of iron-sulfur cluster-containing proteins. Has a low intrinsic ATPase activity which is markedly stimulated by HscB. Involved in the maturation of IscU. The sequence is that of Chaperone protein HscA from Edwardsiella ictaluri (strain 93-146).